Consider the following 697-residue polypeptide: tRNA 5-methylaminomethyl-2-thiouridine biosynthesis bifunctional protein MnmC (697 aa).

Residues 1-275 (MTAKPHKSCQ…KPATLAAIDH (275 aa)) form a tRNA (mnm(5)s(2)U34)-methyltransferase region. Positions 280–697 (VGGGLASANL…LRKLLKGKAL (418 aa)) are FAD-dependent cmnm(5)s(2)U34 oxidoreductase.

The protein in the N-terminal section; belongs to the methyltransferase superfamily. tRNA (mnm(5)s(2)U34)-methyltransferase family. This sequence in the C-terminal section; belongs to the DAO family. Requires FAD as cofactor.

It is found in the cytoplasm. The catalysed reaction is 5-aminomethyl-2-thiouridine(34) in tRNA + S-adenosyl-L-methionine = 5-methylaminomethyl-2-thiouridine(34) in tRNA + S-adenosyl-L-homocysteine + H(+). Functionally, catalyzes the last two steps in the biosynthesis of 5-methylaminomethyl-2-thiouridine (mnm(5)s(2)U) at the wobble position (U34) in tRNA. Catalyzes the FAD-dependent demodification of cmnm(5)s(2)U34 to nm(5)s(2)U34, followed by the transfer of a methyl group from S-adenosyl-L-methionine to nm(5)s(2)U34, to form mnm(5)s(2)U34. The chain is tRNA 5-methylaminomethyl-2-thiouridine biosynthesis bifunctional protein MnmC from Shewanella sp. (strain ANA-3).